Consider the following 227-residue polypeptide: 2,3-bisphosphoglycerate-dependent phosphoglycerate mutase (227 aa).

Residues 8 to 15 (RHGQSIWN), 21 to 22 (TG), Arg-58, 110 to 113 (ERYY), Lys-121, 137 to 138 (RR), and 181 to 182 (GN) each bind substrate. Catalysis depends on His-9, which acts as the Tele-phosphohistidine intermediate. Glu-110 serves as the catalytic Proton donor/acceptor.

Belongs to the phosphoglycerate mutase family. BPG-dependent PGAM subfamily. Homodimer.

The enzyme catalyses (2R)-2-phosphoglycerate = (2R)-3-phosphoglycerate. It functions in the pathway carbohydrate degradation; glycolysis; pyruvate from D-glyceraldehyde 3-phosphate: step 3/5. Functionally, catalyzes the interconversion of 2-phosphoglycerate and 3-phosphoglycerate. The sequence is that of 2,3-bisphosphoglycerate-dependent phosphoglycerate mutase from Pseudoalteromonas atlantica (strain T6c / ATCC BAA-1087).